Here is a 173-residue protein sequence, read N- to C-terminus: Alpha-crystallin A chain (173 aa).

N-acetylmethionine is present on Met1. Positions 1–63 are required for complex formation with BFSP1 and BFSP2; it reads MDIAIQHPWF…RTVLDSGISE (63 aa). Gln6 bears the Deamidated glutamine; partial mark. Phosphoserine is present on Ser45. A Deamidated glutamine; partial modification is found at Gln50. One can recognise a sHSP domain in the interval 52 to 162; it reads LFRTVLDSGI…GHSERAIPVS (111 aa). N6-acetyllysine is present on residues Lys70 and Lys99. His100 contacts Zn(2+). Asn101 bears the Deamidated asparagine; partial mark. Zn(2+) contacts are provided by Glu102 and His107. Residue Ser122 is modified to Phosphoserine. The residue at position 123 (Asn123) is a Deamidated asparagine; partial. The tract at residues 144–173 is disordered; that stretch reads PKVPSGMDAGHSERAIPVSREEKPSSAPSS. A compositionally biased stretch (basic and acidic residues) spans 153–167; the sequence is GHSERAIPVSREEKP. His154 contributes to the Zn(2+) binding site. Ser162 is a glycosylation site (O-linked (GlcNAc) serine).

This sequence belongs to the small heat shock protein (HSP20) family. Heteromer composed of three CRYAA and one CRYAB subunits. Inter-subunit bridging via zinc ions enhances stability, which is crucial as there is no protein turn over in the lens. Can also form homodimers and homotetramers (dimers of dimers) which serve as the building blocks of homooligomers. Within homooligomers, the zinc-binding motif is created from residues of 3 different molecules. His-100 and Glu-102 from one molecule are ligands of the zinc ion, and His-107 and His-154 residues from additional molecules complete the site with tetrahedral coordination geometry. Part of a complex required for lens intermediate filament formation composed of BFSP1, BFSP2 and CRYAA. Acetylation at Lys-70 may increase chaperone activity. In terms of processing, undergoes age-dependent proteolytical cleavage at the C-terminus.

It localises to the cytoplasm. The protein resides in the nucleus. In terms of biological role, contributes to the transparency and refractive index of the lens. Acts as a chaperone, preventing aggregation of various proteins under a wide range of stress conditions. Required for the correct formation of lens intermediate filaments as part of a complex composed of BFSP1, BFSP2 and CRYAA. The polypeptide is Alpha-crystallin A chain (CRYAA) (Melursus ursinus (Sloth bear)).